The sequence spans 210 residues: Uridine kinase (210 aa).

14–21 (GGSGSGKT) serves as a coordination point for ATP.

It belongs to the uridine kinase family.

It is found in the cytoplasm. It catalyses the reaction uridine + ATP = UMP + ADP + H(+). The catalysed reaction is cytidine + ATP = CMP + ADP + H(+). Its pathway is pyrimidine metabolism; CTP biosynthesis via salvage pathway; CTP from cytidine: step 1/3. It functions in the pathway pyrimidine metabolism; UMP biosynthesis via salvage pathway; UMP from uridine: step 1/1. This is Uridine kinase from Deinococcus radiodurans (strain ATCC 13939 / DSM 20539 / JCM 16871 / CCUG 27074 / LMG 4051 / NBRC 15346 / NCIMB 9279 / VKM B-1422 / R1).